We begin with the raw amino-acid sequence, 44 residues long: Small ribosomal subunit protein eS31 (44 aa).

Cys18, Cys21, Cys35, and Cys38 together coordinate Zn(2+). The segment at 18-38 adopts a C4-type zinc-finger fold; it reads CPRCGDTFLAAHDDRQVCGRC.

Belongs to the eukaryotic ribosomal protein eS31 family. Part of the 30S ribosomal subunit. It depends on Zn(2+) as a cofactor.

The protein is Small ribosomal subunit protein eS31 of Halobacterium salinarum (strain ATCC 29341 / DSM 671 / R1).